The sequence spans 157 residues: MARRREIPKRQVLPDPKFGDTTLTKFVNMIMVSGKKAVAEKIVYDALDVVVDRKKGGEHAVLLREALENVGPMVEVKSRRVGGATYQVPVEVRSERKTALAMRWIVEAARKRSEKGMMLRLAGELSDALENRGSAIKKKEDTHRMAEANKAFSHFRW.

This sequence belongs to the universal ribosomal protein uS7 family. In terms of assembly, part of the 30S ribosomal subunit. Contacts proteins S9 and S11.

In terms of biological role, one of the primary rRNA binding proteins, it binds directly to 16S rRNA where it nucleates assembly of the head domain of the 30S subunit. Is located at the subunit interface close to the decoding center, probably blocks exit of the E-site tRNA. The polypeptide is Small ribosomal subunit protein uS7 (Hydrogenovibrio crunogenus (strain DSM 25203 / XCL-2) (Thiomicrospira crunogena)).